The chain runs to 427 residues: MSTSFENKATNRGVITFTIGQDKIKPALDQAFNKIKKDLNVPGFRKGHLPRPIFNQKFGEEVLYEDALNIVLPAAYEAAVAELDLAVVAQPKIDVVSMEKGKDWEISAEVVTKPEVKLGEYKDLAVEVEASKEVTDEEVDAKIERERQNLAELVVKEDAAVEGDTVVIDFVGSVDGVEFDGGKGENFSLELGSGQFIPGFEDQLVGTKAGETKNVEVTFPEDYQAEDLAGKAATFVTTVHEVKSKEVPALDDELAKDIDEEVETLDELKAKYRKELEAAKEIAFDDAVEGAAIELAVANAEIVELPEEMVHDEVHRAMNEFMGNMQRQGISPEMYFQLTGTTQEDLHKQYESEADKRVKTNLVIEAIAKAEGFEATDEEIEKEINDLATEYNMPVEQVRTLLSADMLKHDIAMKKAVEVITETVKVK.

The PPIase FKBP-type domain occupies 163–248 (GDTVVIDFVG…VHEVKSKEVP (86 aa)).

This sequence belongs to the FKBP-type PPIase family. Tig subfamily.

The protein localises to the cytoplasm. The catalysed reaction is [protein]-peptidylproline (omega=180) = [protein]-peptidylproline (omega=0). In terms of biological role, involved in protein export. Acts as a chaperone by maintaining the newly synthesized protein in an open conformation. Functions as a peptidyl-prolyl cis-trans isomerase. The sequence is that of Trigger factor from Streptococcus uberis (strain ATCC BAA-854 / 0140J).